Consider the following 239-residue polypeptide: MQTRITWHGHSNFQVASGGTNVLIDPFFDGNPVAAARWDAIDRPDLVLVTHDHGDHVGQAIDICKATGAKLGCVVGTDARLVEAGLPRELVLNGIGFNIGGTVECAGARITMTQAYHSSESGVPVGYIVTMPDGFTFYHAGDTGIFSEMELWGRLYAIDLALLPIGGVFTMDPRQAALACSLLRARSVIPMHWGTFPVLEQNTTRFREQLANHAPDCRLFNMTPGESLTLDRSQEGCAC.

It belongs to the UPF0173 family.

The protein is UPF0173 metal-dependent hydrolase DVU_3308 of Nitratidesulfovibrio vulgaris (strain ATCC 29579 / DSM 644 / CCUG 34227 / NCIMB 8303 / VKM B-1760 / Hildenborough) (Desulfovibrio vulgaris).